A 773-amino-acid polypeptide reads, in one-letter code: Kelch domain-containing protein 7A (773 aa).

The chain crosses the membrane as a helical span at residues 23–40 (VVLSAAALLLVTAAYKLY). Asn61 carries N-linked (GlcNAc...) asparagine glycosylation. Disordered regions lie at residues 64–99 (EALG…LDYS) and 114–207 (SEEA…APNG). The residue at position 89 (Ser89) is a Phosphoserine. Basic and acidic residues predominate over residues 114–126 (SEEATRKGSDESQ). N-linked (GlcNAc...) asparagine glycosylation occurs at Asn256. The tract at residues 296–355 (KADSRPVPCPAALADAPSPGPGPEPLVTGAASRDEAANTAGGGASEAASPQPVASPSAPG) is disordered. Kelch repeat units lie at residues 323-370 (TGAA…ENPE), 488-534 (KRLV…LCTL), 537-585 (YLFV…ALEG), 586-628 (HLYA…ATVC), and 631-673 (EIFV…AVNG). Over residues 340–354 (SEAASPQPVASPSAP) the composition is skewed to low complexity. Position 361 is a phosphoserine (Ser361).

Its subcellular location is the membrane. The protein is Kelch domain-containing protein 7A (Klhdc7a) of Mus musculus (Mouse).